Consider the following 886-residue polypeptide: Isoleucine--tRNA ligase (886 aa).

A 'HIGH' region motif is present at residues 60 to 70 (PYANGDIHIGH). Glutamate 546 contributes to the L-isoleucyl-5'-AMP binding site. Residues 587-591 (KMSKS) carry the 'KMSKS' region motif. Lysine 590 serves as a coordination point for ATP. 4 residues coordinate Zn(2+): cysteine 856, cysteine 859, cysteine 870, and cysteine 873.

It belongs to the class-I aminoacyl-tRNA synthetase family. IleS type 1 subfamily. In terms of assembly, monomer. Requires Zn(2+) as cofactor.

Its subcellular location is the cytoplasm. It carries out the reaction tRNA(Ile) + L-isoleucine + ATP = L-isoleucyl-tRNA(Ile) + AMP + diphosphate. In terms of biological role, catalyzes the attachment of isoleucine to tRNA(Ile). As IleRS can inadvertently accommodate and process structurally similar amino acids such as valine, to avoid such errors it has two additional distinct tRNA(Ile)-dependent editing activities. One activity is designated as 'pretransfer' editing and involves the hydrolysis of activated Val-AMP. The other activity is designated 'posttransfer' editing and involves deacylation of mischarged Val-tRNA(Ile). The sequence is that of Isoleucine--tRNA ligase from Mesomycoplasma hyopneumoniae (strain 7448) (Mycoplasma hyopneumoniae).